The primary structure comprises 329 residues: Phenylalanine--tRNA ligase alpha subunit (329 aa).

Residue Glu-254 participates in Mg(2+) binding.

The protein belongs to the class-II aminoacyl-tRNA synthetase family. Phe-tRNA synthetase alpha subunit type 1 subfamily. In terms of assembly, tetramer of two alpha and two beta subunits. Requires Mg(2+) as cofactor.

The protein localises to the cytoplasm. It carries out the reaction tRNA(Phe) + L-phenylalanine + ATP = L-phenylalanyl-tRNA(Phe) + AMP + diphosphate + H(+). In Histophilus somni (strain 2336) (Haemophilus somnus), this protein is Phenylalanine--tRNA ligase alpha subunit.